The sequence spans 407 residues: Putative F-box protein At2g16220 (407 aa).

Residues 1-45 form the F-box domain; sequence MNSHFLTNDLILEVLSRLPLKSVARFHCVSKRWASMFGSPYFKEL. Residues 385–407 are disordered; that stretch reads PPSVQPEYDESDSESEEDREIII. Acidic residues predominate over residues 391-407; the sequence is EYDESDSESEEDREIII.

The polypeptide is Putative F-box protein At2g16220 (Arabidopsis thaliana (Mouse-ear cress)).